Consider the following 739-residue polypeptide: MPNMEPTTKEIKEQKIYQEMGLTDSEYELVCSILGREPNYTETGLFSVMWSEHCSYKNSKPVLRKFPTEGKQVLQGPGEGAGIVDIGDGLGVAFKVESHNHPSYVEPYQGAATGVGGIIRDVFSMGARPIAMLNSLRFGELDTPHAKYLVSEVVAGIAGYGNSIGIPTVGGEIQFDPCYTKNPLVNAMCVGLIEAKDIQKGQAKGIGNPVMYVGAKTGRDGIHGATFASVEFSEEGEQQRSAVQVGDPFMEKLLLEACLDVIRDHSDILVGIQDMGAAGLVSSSSEMASKAGAGLELIMDDVPQRELHMTPYEMLLSESQERMLLCVKKGHVEEIQALFERYGLEAVVIGQVTDDKMYKIIHHGEVVANVPVDALAEDAPVYHKPSKEPTRYQAFQEEEAFVPAMDDVVGVWKELLAQPTIASKRHIYEQYDYQVRTDTAVVPGSDAAIVRVRGTEKAIAMTTDCNSRYLYLDPEVGGAIAVAEAARNIVCSGGKPLAITDGLNFGNPEKPEIFWEIEKAADGISAACLELDTPVISGNVSLYNETDGTGIYPTPVIGMVGLVEDLAHITTQDFKNSGDVIFLIGETKAEYSGSELQKLQQGKISGRAPELDLVTEKKYQQLLLTAIQEGLVASSHDLAEGGFGVALAEATFKAGLGAEVEVPFALNQLFSESQSRFLVSVKPENEAAFAQLMELEKVYRLGVVTEDDTIRVKHKEDQVTAKTTELRSIWEGAIPCLLK.

The active site involves H53. Positions 56 and 95 each coordinate ATP. E97 is a Mg(2+) binding site. Substrate contacts are provided by residues 98 to 101 and R120; that span reads SHNH. Catalysis depends on H99, which acts as the Proton acceptor. Residue D121 participates in Mg(2+) binding. Position 244 (Q244) interacts with substrate. D274 lines the Mg(2+) pocket. Residue 318 to 320 coordinates substrate; that stretch reads ESQ. The ATP site is built by D501 and G538. Residue N539 participates in Mg(2+) binding. S541 serves as a coordination point for substrate.

This sequence belongs to the FGAMS family. Monomer. Part of the FGAM synthase complex composed of 1 PurL, 1 PurQ and 2 PurS subunits.

The protein resides in the cytoplasm. It catalyses the reaction N(2)-formyl-N(1)-(5-phospho-beta-D-ribosyl)glycinamide + L-glutamine + ATP + H2O = 2-formamido-N(1)-(5-O-phospho-beta-D-ribosyl)acetamidine + L-glutamate + ADP + phosphate + H(+). Its pathway is purine metabolism; IMP biosynthesis via de novo pathway; 5-amino-1-(5-phospho-D-ribosyl)imidazole from N(2)-formyl-N(1)-(5-phospho-D-ribosyl)glycinamide: step 1/2. Part of the phosphoribosylformylglycinamidine synthase complex involved in the purines biosynthetic pathway. Catalyzes the ATP-dependent conversion of formylglycinamide ribonucleotide (FGAR) and glutamine to yield formylglycinamidine ribonucleotide (FGAM) and glutamate. The FGAM synthase complex is composed of three subunits. PurQ produces an ammonia molecule by converting glutamine to glutamate. PurL transfers the ammonia molecule to FGAR to form FGAM in an ATP-dependent manner. PurS interacts with PurQ and PurL and is thought to assist in the transfer of the ammonia molecule from PurQ to PurL. The chain is Phosphoribosylformylglycinamidine synthase subunit PurL from Listeria monocytogenes serovar 1/2a (strain ATCC BAA-679 / EGD-e).